Consider the following 1206-residue polypeptide: DNA polymerase (1206 aa).

This sequence belongs to the DNA polymerase type-B family.

It catalyses the reaction DNA(n) + a 2'-deoxyribonucleoside 5'-triphosphate = DNA(n+1) + diphosphate. The polypeptide is DNA polymerase (dpo) (Pyramimonas orientalis virus (PoV01)).